The sequence spans 470 residues: Argininosuccinate lyase (470 aa).

This sequence belongs to the lyase 1 family. Argininosuccinate lyase subfamily.

The protein localises to the cytoplasm. It catalyses the reaction 2-(N(omega)-L-arginino)succinate = fumarate + L-arginine. The protein operates within amino-acid biosynthesis; L-arginine biosynthesis; L-arginine from L-ornithine and carbamoyl phosphate: step 3/3. This Synechococcus sp. (strain WH7803) protein is Argininosuccinate lyase.